Consider the following 641-residue polypeptide: Bifunctional protein glk (641 aa).

The interval Met-1–Ser-340 is glucokinase. Ala-23–Thr-28 provides a ligand contact to ATP. Positions Ser-341–Thr-417 constitute an HTH rpiR-type domain. Residues Ser-341–Asp-641 are putative HTH-type transcriptional regulator. The H-T-H motif DNA-binding region spans Ile-377–Arg-396. The 140-residue stretch at Ala-461 to Ala-600 folds into the SIS domain. The helical transmembrane segment at Ser-576–Ile-596 threads the bilayer.

This sequence in the N-terminal section; belongs to the bacterial glucokinase family.

The protein resides in the membrane. It carries out the reaction D-glucose + ATP = D-glucose 6-phosphate + ADP + H(+). The chain is Bifunctional protein glk (glk) from Burkholderia pseudomallei (strain 1710b).